We begin with the raw amino-acid sequence, 477 residues long: Cysteine--tRNA ligase (477 aa).

Cys28 serves as a coordination point for Zn(2+). The 'HIGH' region motif lies at 30–40 (PTVYDYAHIGN). Residues Cys213, His238, and Glu242 each contribute to the Zn(2+) site. The 'KMSKS' region motif lies at 270-274 (KMSKS). Residue Lys273 coordinates ATP.

This sequence belongs to the class-I aminoacyl-tRNA synthetase family. Monomer. Requires Zn(2+) as cofactor.

The protein resides in the cytoplasm. It catalyses the reaction tRNA(Cys) + L-cysteine + ATP = L-cysteinyl-tRNA(Cys) + AMP + diphosphate. The protein is Cysteine--tRNA ligase of Chlamydia trachomatis serovar A (strain ATCC VR-571B / DSM 19440 / HAR-13).